The sequence spans 589 residues: Isocitrate dehydrogenase kinase/phosphatase (589 aa).

ATP-binding positions include 322–328 and Lys343; that span reads APGIRGL. Residue Asp378 is part of the active site.

The protein belongs to the AceK family.

It is found in the cytoplasm. The catalysed reaction is L-seryl-[isocitrate dehydrogenase] + ATP = O-phospho-L-seryl-[isocitrate dehydrogenase] + ADP + H(+). Its function is as follows. Bifunctional enzyme which can phosphorylate or dephosphorylate isocitrate dehydrogenase (IDH) on a specific serine residue. This is a regulatory mechanism which enables bacteria to bypass the Krebs cycle via the glyoxylate shunt in response to the source of carbon. When bacteria are grown on glucose, IDH is fully active and unphosphorylated, but when grown on acetate or ethanol, the activity of IDH declines drastically concomitant with its phosphorylation. The protein is Isocitrate dehydrogenase kinase/phosphatase of Azoarcus sp. (strain BH72).